The chain runs to 639 residues: Threonine--tRNA ligase (639 aa).

The TGS domain occupies 1–62 (MYQLTLPDKS…ETDANIEVLT (62 aa)). The catalytic stretch occupies residues 246-537 (DHRKIGKELD…LIEHYEGKFP (292 aa)). Cys-337, His-388, and His-514 together coordinate Zn(2+).

The protein belongs to the class-II aminoacyl-tRNA synthetase family. Homodimer. Zn(2+) serves as cofactor.

The protein resides in the cytoplasm. The enzyme catalyses tRNA(Thr) + L-threonine + ATP = L-threonyl-tRNA(Thr) + AMP + diphosphate + H(+). Its function is as follows. Catalyzes the attachment of threonine to tRNA(Thr) in a two-step reaction: L-threonine is first activated by ATP to form Thr-AMP and then transferred to the acceptor end of tRNA(Thr). Also edits incorrectly charged L-seryl-tRNA(Thr). In Leptospira borgpetersenii serovar Hardjo-bovis (strain JB197), this protein is Threonine--tRNA ligase.